The chain runs to 679 residues: Mitotic interactor and substrate of PLK1 (679 aa).

Ser-78 is subject to Phosphoserine; by CDK1; in vitro. 2 disordered regions span residues Ala-151–Glu-182 and Ala-206–Val-245. A compositionally biased stretch (polar residues) spans Arg-153–Gly-163. A Phosphoserine modification is found at Ser-156. Phosphothreonine; by CDK1; in vitro occurs at positions 164 and 172. Residue Thr-179 is modified to Phosphothreonine. Phosphoserine; by CDK1; in vitro is present on Ser-214. Thr-219 is subject to Phosphothreonine. At Thr-224 the chain carries Phosphothreonine; by CDK1; in vitro. Position 284 is a phosphoserine; by CDK1; in vitro (Ser-284). Thr-287 carries the post-translational modification Phosphothreonine; by CDK1; in vitro. At Ser-348 the chain carries Phosphoserine. Residues Gln-360 to His-371 show a composition bias toward basic and acidic residues. The disordered stretch occupies residues Gln-360–Arg-419. Thr-377 is modified (phosphothreonine; by CDK1; in vitro). A Phosphoserine; by CDK1; in vitro modification is found at Ser-382. Ser-394, Ser-395, and Ser-397 each carry phosphoserine; by PLK1; in vitro. At Ser-400 the chain carries Phosphoserine. The span at Pro-401–Ala-411 shows a compositional bias: low complexity. Phosphoserine is present on Ser-430. A disordered region spans residues Pro-447–Ala-494. Phosphoserine; by PLK1; in vitro is present on Ser-471. Positions Glu-472–Gln-482 are enriched in polar residues. Phosphoserine is present on residues Ser-541 and Ser-543. Positions Asp-545–Leu-569 form a coiled coil. The segment covering Arg-557 to Asn-567 has biased composition (basic and acidic residues). 2 disordered regions span residues Arg-557–Ser-598 and Asp-622–Pro-643. Position 575 is a phosphoserine; by CDK1; in vitro (Ser-575). Thr-577 is subject to Phosphothreonine. Residues Ser-582 and Ser-586 each carry the phosphoserine; by PLK1; in vitro modification. The span at Asp-583–Ser-593 shows a compositional bias: low complexity. Ser-675 carries the post-translational modification Phosphoserine.

It belongs to the MISP family. In terms of assembly, associates with F-actin. Interacts with DCTN1; this interaction regulates DCTN1 distribution at the cell cortex. Interacts with PTK2/FAK and MAPRE1. Post-translationally, phosphorylated by CDK1 and PLK1. CDK1 is the priming kinase for PLK1 phosphorylation. Phosphorylation by PLK1 is required for proper spindle orientation at metaphase.

It is found in the cell junction. Its subcellular location is the focal adhesion. The protein localises to the cytoplasm. The protein resides in the cytoskeleton. It localises to the cell cortex. Plays a role in mitotic spindle orientation and mitotic progression. Regulates the distribution of dynactin at the cell cortex in a PLK1-dependent manner, thus stabilizing cortical and astral microtubule attachments required for proper mitotic spindle positioning. May link microtubules to the actin cytospkeleton and focal adhesions. May be required for directed cell migration and centrosome orientation. May also be necessary for proper stacking of the Golgi apparatus. This Homo sapiens (Human) protein is Mitotic interactor and substrate of PLK1.